We begin with the raw amino-acid sequence, 202 residues long: Coiled-coil domain-containing protein 85B (202 aa).

Met1 carries the N-acetylmethionine modification. Coiled-coil stretches lie at residues Arg44–Cys82 and Gln118–Cys141. A compositionally biased stretch (gly residues) spans Gly152 to Ala162. Positions Gly152–Asp202 are disordered. A compositionally biased stretch (low complexity) spans Asp180–Ser190.

The protein belongs to the CCDC85 family. As to quaternary structure, interacts with CEBPB. May interact with CEBPD. Interacts with EURL. Interacts with MCRS1. Interacts with TCF7L2; competes with CTNNB1. Interacts with ANKRD26. Interacts with the beta-catenin family proteins ARVCF, CTNND1, CTNND2 and PKP4. In terms of tissue distribution, expressed in white and brown adipose tissue.

Its subcellular location is the nucleus. It is found in the cytoplasm. It localises to the cytoskeleton. The protein resides in the microtubule organizing center. The protein localises to the centrosome. Its subcellular location is the cell junction. It is found in the adherens junction. Its function is as follows. Functions as a transcriptional repressor. May inhibit the activity of CTNNB1 in a TP53-dependent manner and thus regulate cell growth. May function in adipocyte differentiation, negatively regulating mitotic clonal expansion. Plays a role in cell-cell adhesion and epithelium development through its interaction with proteins of the beta-catenin family. The polypeptide is Coiled-coil domain-containing protein 85B (Ccdc85b) (Mus musculus (Mouse)).